Here is a 1898-residue protein sequence, read N- to C-terminus: Protein NYNRIN (1898 aa).

Disordered regions lie at residues 289 to 315 (SNNQDGMDSAQEEGTVQATSSQDSTNH), 424 to 450 (LPSAESPAGRPDGGLGGEAALQNCPRP), 467 to 533 (DVKD…TDQS), 618 to 691 (EPTT…TDAG), and 711 to 731 (VSLLKGQGQAGRQGPQSSGTL). The segment covering 618-627 (EPTTPKTPQA) has biased composition (polar residues). Residues 649–672 (PAATVSKAPAASKAPAAPKVPVTP) are compositionally biased toward low complexity. In terms of domain architecture, RNase NYN spans 792 to 942 (LRRVVIDGSS…LGRDGPTLDE (151 aa)). A disordered region spans residues 968–1019 (SASVTELSDDADSGPLESLPNMEEVREEKEERQDEEQRQGQGTQKAAEEDDL). Over residues 990-1005 (EEVREEKEERQDEEQR) the composition is skewed to basic and acidic residues. The RNase H type-1 domain maps to 1304–1450 (LSTFVCIHMS…VDTLAKQGAQ (147 aa)). Helical transmembrane passes span 1372–1392 (VVFLTHCNWIFSLLWELLPLW) and 1408–1428 (PSLLSYIISLTSGLSSLPFIY). In terms of domain architecture, Integrase catalytic spans 1609-1774 (RSTAPWSNLQ…ESRLTEPLWW (166 aa)).

Its subcellular location is the membrane. The protein is Protein NYNRIN (NYNRIN) of Homo sapiens (Human).